The chain runs to 200 residues: Peptidyl-tRNA hydrolase (200 aa).

Tyr-14 contributes to the tRNA binding site. Residue His-19 is the Proton acceptor of the active site. TRNA is bound by residues Phe-64, Asn-66, and Asn-112.

Belongs to the PTH family. As to quaternary structure, monomer.

It localises to the cytoplasm. It carries out the reaction an N-acyl-L-alpha-aminoacyl-tRNA + H2O = an N-acyl-L-amino acid + a tRNA + H(+). Functionally, hydrolyzes ribosome-free peptidyl-tRNAs (with 1 or more amino acids incorporated), which drop off the ribosome during protein synthesis, or as a result of ribosome stalling. Its function is as follows. Catalyzes the release of premature peptidyl moieties from peptidyl-tRNA molecules trapped in stalled 50S ribosomal subunits, and thus maintains levels of free tRNAs and 50S ribosomes. This chain is Peptidyl-tRNA hydrolase, found in Maricaulis maris (strain MCS10) (Caulobacter maris).